The chain runs to 420 residues: 3-phosphoshikimate 1-carboxyvinyltransferase (420 aa).

Positions 20, 21, and 25 each coordinate 3-phosphoshikimate. Lys-20 serves as a coordination point for phosphoenolpyruvate. Arg-119 provides a ligand contact to phosphoenolpyruvate. Ser-161, Ser-162, Gln-163, Ser-189, Asp-303, Gln-326, and Lys-330 together coordinate 3-phosphoshikimate. Gln-163 lines the phosphoenolpyruvate pocket. The active-site Proton acceptor is Asp-303. Residues Arg-334, Arg-375, and Lys-400 each contribute to the phosphoenolpyruvate site.

This sequence belongs to the EPSP synthase family. Monomer.

Its subcellular location is the cytoplasm. The enzyme catalyses 3-phosphoshikimate + phosphoenolpyruvate = 5-O-(1-carboxyvinyl)-3-phosphoshikimate + phosphate. Its pathway is metabolic intermediate biosynthesis; chorismate biosynthesis; chorismate from D-erythrose 4-phosphate and phosphoenolpyruvate: step 6/7. In terms of biological role, catalyzes the transfer of the enolpyruvyl moiety of phosphoenolpyruvate (PEP) to the 5-hydroxyl of shikimate-3-phosphate (S3P) to produce enolpyruvyl shikimate-3-phosphate and inorganic phosphate. This Dehalococcoides mccartyi (strain ATCC BAA-2100 / JCM 16839 / KCTC 5957 / BAV1) protein is 3-phosphoshikimate 1-carboxyvinyltransferase.